Here is a 210-residue protein sequence, read N- to C-terminus: Orotate phosphoribosyltransferase (210 aa).

5-phospho-alpha-D-ribose 1-diphosphate-binding positions include R97, K101, H103, and 123–131 (EDLISTGGS). S127 contributes to the orotate binding site.

It belongs to the purine/pyrimidine phosphoribosyltransferase family. PyrE subfamily. Homodimer. Mg(2+) is required as a cofactor.

The catalysed reaction is orotidine 5'-phosphate + diphosphate = orotate + 5-phospho-alpha-D-ribose 1-diphosphate. The protein operates within pyrimidine metabolism; UMP biosynthesis via de novo pathway; UMP from orotate: step 1/2. Catalyzes the transfer of a ribosyl phosphate group from 5-phosphoribose 1-diphosphate to orotate, leading to the formation of orotidine monophosphate (OMP). This is Orotate phosphoribosyltransferase from Porphyromonas gingivalis (strain ATCC BAA-308 / W83).